The chain runs to 304 residues: Protease HtpX homolog (304 aa).

Helical transmembrane passes span 14–34 (IFII…IGII) and 39–59 (YLNG…IMVM). A Zn(2+)-binding site is contributed by H144. Residue E145 is part of the active site. Position 148 (H148) interacts with Zn(2+). Transmembrane regions (helical) follow at residues 159-179 (IAIA…RMIF) and 202-222 (AIIY…ATAI). Position 231 (E231) interacts with Zn(2+).

This sequence belongs to the peptidase M48B family. Requires Zn(2+) as cofactor.

The protein resides in the cell membrane. This is Protease HtpX homolog from Listeria monocytogenes serotype 4b (strain CLIP80459).